We begin with the raw amino-acid sequence, 515 residues long: MAKISRLFGSTVKAAITAQAGFHGKRIPAVSSLQEHIVKSTPARYNSTQACLENDISGTDNKGFKGHDMLAPFTAGWQSTDVDPLIIEKSEGSHVYDMQGRKYIDTLAGLWCTALGGNEPRLVDAATKQLNTLPFYHSFWNRTTKPSLDLAKELLDMFTAKKMAKAFFTNSGSEANDTQVKLVWYYNNALGRPNKKKFIARAKAYHGSTLISASLTGLPALHQNFDLPAPFVLHTDCPHYWRYHLPGETEEEFSTRLAKNLEDLILKEGPETIAAFIAEPVMGAGGVIPPPATYFDKIQAVVKKYDILFIADEVICAFGRLGTMFGSDMYNIKPDLVTLAKALSSAYMPIGAVLVSPEVSDVIHSQSNKLGSFSHGFTYSGHPVACAVALEAIKIYKERNMVERVNRISPKFQEGLKAFSDSPIIGEIRGLGLILATEFANNKSPNDHFPPEWGVGAYFGAQCQKNGMLVRVAGDTIMMSPPFVVTPEELDELIRIYGKALRETEKRVEELKSQK.

The N-terminal 57 residues, 1-57 (MAKISRLFGSTVKAAITAQAGFHGKRIPAVSSLQEHIVKSTPARYNSTQACLENDIS), are a transit peptide targeting the mitochondrion. 172-173 (GS) contributes to the pyridoxal 5'-phosphate binding site. Tyrosine 205 contacts substrate. Aspartate 312 lines the pyridoxal 5'-phosphate pocket. Lysine 341 is a binding site for substrate. Position 341 is an N6-(pyridoxal phosphate)lysine (lysine 341).

This sequence belongs to the class-III pyridoxal-phosphate-dependent aminotransferase family. In terms of tissue distribution, expressed in leaves, roots, stems, flowers and fruits.

It is found in the mitochondrion. It catalyses the reaction 4-aminobutanoate + pyruvate = succinate semialdehyde + L-alanine. The catalysed reaction is 4-aminobutanoate + glyoxylate = succinate semialdehyde + glycine. In terms of biological role, transaminase that degrades gamma-amino butyric acid (GABA) and uses pyruvate or glyoxylate as amino-group acceptor. Cannot use beta-alanine, ornithine, acetylornithine, serine, glycine, asparagine, glutamine, glutamate, valine, leucine, isoleucine, methionine, phenylalanine, histidine, lysine, arginine, aspartate, threonine, tyrosine, tryptophan, proline, or cysteine as amino donors. Acts predominantly in vegetative tissues. The protein is Gamma aminobutyrate transaminase 1, mitochondrial (GABA-TP1) of Solanum lycopersicum (Tomato).